A 446-amino-acid polypeptide reads, in one-letter code: Delta(8)-fatty-acid desaturase (446 aa).

The Cytochrome b5 heme-binding domain maps to 5–89 (KKYISVGELE…LEDYLVSEIS (85 aa)). Residues H40 and H63 each coordinate heme. A run of 2 helical transmembrane segments spans residues 112–132 (VIYC…GVLC) and 136–156 (LWVH…AAYL). A Histidine box-1 motif is present at residues 158–162 (HDSGH). Helical transmembrane passes span 174–195 (FAQV…KWTH), 253–273 (IYLV…LLLF), 282–302 (ALNI…VSCL), and 309–329 (VLFV…FTLN). A Histidine box-2 motif is present at residues 195–199 (HNAHH). Residues 372 to 376 (QLEHH) carry the Histidine box-3 motif.

It belongs to the fatty acid desaturase type 1 family. It depends on Fe cation as a cofactor. As to expression, expressed only in young leaves.

The protein localises to the membrane. It catalyses the reaction an N-acyl-(4R)-4-hydroxysphinganine + 2 Fe(II)-[cytochrome b5] + O2 + 2 H(+) = a (4R,8E)-4-hydroxysphingenine ceramide + 2 Fe(III)-[cytochrome b5] + 2 H2O. It carries out the reaction an N-acyl-(4R)-4-hydroxysphinganine + 2 Fe(II)-[cytochrome b5] + O2 + 2 H(+) = a (4R,8Z)-4-hydroxysphing-8-enine ceramide + 2 Fe(III)-[cytochrome b5] + 2 H2O. Functionally, plays a major role as delta(8)-fatty-acid desaturase which introduces a double bond at the 8-position in the long-chain base (LCB) of ceramides with or without a hydroxy group at the 4-position. The enzyme produces both the 8E and 8Z isomers (in a 4:1 ratio). This structural modification contributes to the quantitative partitioning of ceramides between the two major sphingolipid classes, glucosylceramides and glycosylinositolphosphoryl ceramides. Sphingolipids are important membrane components involved in environmental stress responses, such as resistance to chilling, and act as cell signaling molecules. This is Delta(8)-fatty-acid desaturase (sld1) from Borago officinalis (Bourrache).